A 548-amino-acid polypeptide reads, in one-letter code: WAP, Kazal, immunoglobulin, Kunitz and NTR domain-containing protein 1 (548 aa).

A signal peptide spans 1 to 19 (MPALRPLLPLLLLLRLTSG). The WAP domain occupies 26–79 (LGSHPGVCPNQLSPNLWVDAQSTCERECSRDQDCAAAEKCCINVCGLHSCVAAR). Disulfide bonds link Cys-33–Cys-66, Cys-49–Cys-70, Cys-53–Cys-65, Cys-59–Cys-75, Cys-116–Cys-146, Cys-120–Cys-139, and Cys-128–Cys-157. The region spanning 108-159 (WDGQPVCRCRDRCEKEPSFTCASDGLTYYNRCYMDAEACLRGLHLHIVPCKH) is the Kazal-like domain. The interval 164–184 (PPSSPGPPETTARPTPGAAPV) is disordered. Residues 186–279 (PALYSSPSPQ…GLLRADFPLS (94 aa)) form the Ig-like C2-type domain. 10 cysteine pairs are disulfide-bonded: Cys-207/Cys-263, Cys-299/Cys-351, Cys-306/Cys-334, Cys-326/Cys-347, Cys-359/Cys-409, Cys-368/Cys-392, Cys-384/Cys-405, Cys-417/Cys-489, Cys-420/Cys-491, and Cys-431/Cys-540. 2 BPTI/Kunitz inhibitor domains span residues 299–351 (CLPD…QQAC) and 359–409 (CVLP…EDAC). An NTR domain is found at 409–540 (CPVPRTPPCR…ILELLEKQAC (132 aa)). N-linked (GlcNAc...) asparagine glycosylation is present at Asn-493.

Belongs to the WFIKKN family. Expressed in pancreas, kidney, liver, placenta, and lung.

The protein resides in the secreted. In terms of biological role, protease-inhibitor that contains multiple distinct protease inhibitor domains. Probably has serine protease- and metalloprotease-inhibitor activity. The polypeptide is WAP, Kazal, immunoglobulin, Kunitz and NTR domain-containing protein 1 (WFIKKN1) (Homo sapiens (Human)).